A 134-amino-acid chain; its full sequence is MSWQAYVDDHLMCDIEGHEGHRLTAAAIVGHDGSVWAQSATFPQFKPEEMNGIMTDFNEPGHLAPTGLHLGGTKYMVIQGEAGAVIRGKKGSGGITIKKTGQALVFGIYEEPVAPGQCNMVVERLGDYLLEQGL.

Residues C13 and C118 are joined by a disulfide bond. An Involved in PIP2 interaction motif is present at residues 84 to 100; that stretch reads AVIRGKKGSGGITIKKT.

This sequence belongs to the profilin family. Occurs in many kinds of cells as a complex with monomeric actin in a 1:1 ratio. Post-translationally, phosphorylated by MAP kinases.

It localises to the cytoplasm. It is found in the cytoskeleton. Its function is as follows. Binds to actin and affects the structure of the cytoskeleton. At high concentrations, profilin prevents the polymerization of actin, whereas it enhances it at low concentrations. This Olea europaea (Common olive) protein is Profilin-3.